Consider the following 80-residue polypeptide: uncharacterized protein (80 aa).

This is an uncharacterized protein from Vaccinia virus (strain Western Reserve) (VACV).